The primary structure comprises 372 residues: Protein L-Myc-1a (372 aa).

2 disordered regions span residues 172–226 (KVAA…ADPF) and 243–306 (NYAA…DDLR). Acidic residues predominate over residues 187 to 197 (SDDDEDDDEID). Residues 269–284 (ESSSAPSSPLSSPATS) show a composition bias toward low complexity. Residues 289-341 (STEQRRNFLERKRRDDLRSRFQALREEIPGLSGSSKTSKVAILTQATDYLLQL) enclose the bHLH domain. Positions 290–306 (TEQRRNFLERKRRDDLR) are enriched in basic and acidic residues. Positions 341 to 369 (LHSSQRRQAQEKRKLKAKQQQLLRRISAL) are leucine-zipper.

As to quaternary structure, efficient DNA binding requires dimerization with another bHLH protein. Binds DNA as a heterodimer with max. Uterus.

Its subcellular location is the nucleus. This chain is Protein L-Myc-1a, found in Danio rerio (Zebrafish).